The primary structure comprises 329 residues: Malate dehydrogenase (329 aa).

12–18 provides a ligand contact to NAD(+); sequence GAAGQIG. Positions 93 and 99 each coordinate substrate. Residues N106, Q113, and 130 to 132 each bind NAD(+); that span reads TGN. Substrate-binding residues include N132 and R163. The active-site Proton acceptor is H188.

The protein belongs to the LDH/MDH superfamily. MDH type 2 family.

It carries out the reaction (S)-malate + NAD(+) = oxaloacetate + NADH + H(+). Functionally, catalyzes the reversible oxidation of malate to oxaloacetate. The protein is Malate dehydrogenase of Mycobacterium leprae (strain TN).